Here is a 436-residue protein sequence, read N- to C-terminus: Serine--tRNA ligase (436 aa).

239–241 (TAE) is a binding site for L-serine. 270 to 272 (RLE) serves as a coordination point for ATP. Glu-293 is an L-serine binding site. Position 357 to 360 (357 to 360 (EISS)) interacts with ATP. An L-serine-binding site is contributed by Ser-393.

Belongs to the class-II aminoacyl-tRNA synthetase family. Type-1 seryl-tRNA synthetase subfamily. Homodimer. The tRNA molecule binds across the dimer.

The protein resides in the cytoplasm. It carries out the reaction tRNA(Ser) + L-serine + ATP = L-seryl-tRNA(Ser) + AMP + diphosphate + H(+). It catalyses the reaction tRNA(Sec) + L-serine + ATP = L-seryl-tRNA(Sec) + AMP + diphosphate + H(+). The protein operates within aminoacyl-tRNA biosynthesis; selenocysteinyl-tRNA(Sec) biosynthesis; L-seryl-tRNA(Sec) from L-serine and tRNA(Sec): step 1/1. In terms of biological role, catalyzes the attachment of serine to tRNA(Ser). Is also able to aminoacylate tRNA(Sec) with serine, to form the misacylated tRNA L-seryl-tRNA(Sec), which will be further converted into selenocysteinyl-tRNA(Sec). The protein is Serine--tRNA ligase of Blochmanniella floridana.